Here is a 226-residue protein sequence, read N- to C-terminus: ATP-dependent Clp protease proteolytic subunit 4 (226 aa).

The active-site Nucleophile is S122. The active site involves H147.

It belongs to the peptidase S14 family. Fourteen ClpP subunits assemble into 2 heptameric rings which stack back to back to give a disk-like structure with a central cavity, resembling the structure of eukaryotic proteasomes.

The protein resides in the cytoplasm. It carries out the reaction Hydrolysis of proteins to small peptides in the presence of ATP and magnesium. alpha-casein is the usual test substrate. In the absence of ATP, only oligopeptides shorter than five residues are hydrolyzed (such as succinyl-Leu-Tyr-|-NHMec, and Leu-Tyr-Leu-|-Tyr-Trp, in which cleavage of the -Tyr-|-Leu- and -Tyr-|-Trp bonds also occurs).. In terms of biological role, cleaves peptides in various proteins in a process that requires ATP hydrolysis. Has a chymotrypsin-like activity. Plays a major role in the degradation of misfolded proteins. The chain is ATP-dependent Clp protease proteolytic subunit 4 from Streptomyces avermitilis (strain ATCC 31267 / DSM 46492 / JCM 5070 / NBRC 14893 / NCIMB 12804 / NRRL 8165 / MA-4680).